Reading from the N-terminus, the 361-residue chain is Pseudouridine-5'-phosphate glycosidase (361 aa).

The Proton donor role is filled by Glu27. Residues Lys88 and Val108 each coordinate substrate. Asp140 contacts Mn(2+). Residue 142–144 coordinates substrate; that stretch reads SAD. The active-site Nucleophile is the Lys161. The tract at residues 306–361 is disordered; that stretch reads DRSPTDPAAPDPTAPDPAAPDPTAPDPAAPDSAAPDLAGPDPSAPDPAAVARAHRP. Residues 312–333 are compositionally biased toward pro residues; the sequence is PAAPDPTAPDPAAPDPTAPDPA. Low complexity predominate over residues 334-354; that stretch reads APDSAAPDLAGPDPSAPDPAA.

Belongs to the pseudouridine-5'-phosphate glycosidase family. In terms of assembly, homotrimer. Mn(2+) serves as cofactor.

The enzyme catalyses D-ribose 5-phosphate + uracil = psi-UMP + H2O. Functionally, catalyzes the reversible cleavage of pseudouridine 5'-phosphate (PsiMP) to ribose 5-phosphate and uracil. Functions biologically in the cleavage direction, as part of a pseudouridine degradation pathway. The sequence is that of Pseudouridine-5'-phosphate glycosidase from Frankia alni (strain DSM 45986 / CECT 9034 / ACN14a).